The following is a 160-amino-acid chain: uncharacterized protein (160 aa).

The stretch at 69-145 (NQLLNMMAQA…EQREHVKEQR (77 aa)) forms a coiled coil. 2 disordered regions span residues 82–109 (GVRL…LKNA) and 129–160 (KKKQ…HRGK). The segment covering 86–99 (QGRRQKKINPKRLQ) has biased composition (basic residues). The span at 133 to 146 (IMKEQREHVKEQRY) shows a compositional bias: basic and acidic residues. Over residues 147 to 160 (MLKKQKAKKKHRGK) the composition is skewed to basic residues.

This is an uncharacterized protein from Bacillus subtilis (strain 168).